The chain runs to 113 residues: Nucleoid-associated protein Syncc9605_0027 (113 aa).

Belongs to the YbaB/EbfC family. Homodimer.

The protein localises to the cytoplasm. It localises to the nucleoid. Functionally, binds to DNA and alters its conformation. May be involved in regulation of gene expression, nucleoid organization and DNA protection. This Synechococcus sp. (strain CC9605) protein is Nucleoid-associated protein Syncc9605_0027.